Here is a 1651-residue protein sequence, read N- to C-terminus: A.superbus venom factor 2 (1651 aa).

Positions 1-22 are cleaved as a signal peptide; it reads MEGMALYLVAALLIGFPGSSHG. N-linked (GlcNAc...) asparagine glycosylation occurs at N189. The Mg(2+) site is built by P519, D542, V543, and D545. 12 disulfide bridges follow: C547–C808, C616–C651, C684–C711, C685–C718, C698–C719, C864–C1501, C1346–C1477, C1377–C1446, C1494–C1499, C1506–C1578, C1525–C1649, and C1625–C1634. Residues 657 to 739 constitute a propeptide that is removed on maturation; it reads RRRRSSVLLL…QRESELFLAR (83 aa). The tract at residues 661 to 739 is C3a-like domain; that stretch reads SSVLLLDSKA…QRESELFLAR (79 aa). Positions 684-719 constitute an Anaphylatoxin-like domain; it reads CCEDGMHENPMGYTCEKRAKYTQEGDACKAAFLECC. The factor B binding site stretch occupies residues 743–754; sequence EDEFFEEDNIIS. Positions 992 to 1269 are excised as a propeptide; it reads HLIITPSGSG…VMVFQALAEY (278 aa). Positions 992–1269 are C3d-like domain; the sequence is HLIITPSGSG…VMVFQALAEY (278 aa). The interval 1197–1259 is factor H binding site; that stretch reads VLMAASTGRD…GGTYGQTQAT (63 aa). 2 N-linked (GlcNAc...) asparagine glycosylation sites follow: N1282 and N1352. An NTR domain is found at 1506 to 1649; it reads CSLLNQQKKI…LSNTLTIFGC (144 aa).

This sequence belongs to the venom complement C3 homolog family. Heterotrimer of alpha, beta and gamma chains; disulfide-linked. Is active with factor B in the presence of factor D. In terms of processing, first processed by the removal of 4 Arg residues by furin-type protease, forming two chains, alpha and gamma/beta precursor, linked by a disulfide bond. This mature AVF is composed of three chains: alpha, gamma and beta. In terms of tissue distribution, expressed by the venom gland.

The protein resides in the secreted. Functionally, complement-activating protein in snake venom. It is a structural and functional analog of complement component C3b, the activated form of C3. It binds factor B (CFB), which is subsequently cleaved by factor D (CFD) to form the bimolecular complex AVF/Bb. AVF/Bb is a C3 convertase that cleaves complement component C3, but not C5 (as do CVF/Bb). The polypeptide is A.superbus venom factor 2 (Austrelaps superbus (Lowland copperhead snake)).